The sequence spans 293 residues: Phosphatidylcholine-sterol acyltransferase (293 aa).

An N-linked (GlcNAc...) asparagine glycan is attached at N26. The Nucleophile role is filled by S123. N179 is a glycosylation site (N-linked (GlcNAc...) asparagine). Residues C220 and C263 are joined by a disulfide bond. D252 acts as the Charge relay system in catalysis. Residue N280 is glycosylated (N-linked (GlcNAc...) asparagine). H284 (charge relay system) is an active-site residue.

This sequence belongs to the AB hydrolase superfamily. Lipase family.

It is found in the secreted. The catalysed reaction is a sterol + a 1,2-diacyl-sn-glycero-3-phosphocholine = a sterol ester + a 1-acyl-sn-glycero-3-phosphocholine. APOA1 is the most potent activator in plasma. Also activated by APOE, APOC1 and APOA4. Central enzyme in the extracellular metabolism of plasma lipoproteins. Synthesized mainly in the liver and secreted into plasma where it converts cholesterol and phosphatidylcholines (lecithins) to cholesteryl esters and lysophosphatidylcholines on the surface of high and low density lipoproteins (HDLs and LDLs). The cholesterol ester is then transported back to the liver. Has a preference for plasma 16:0-18:2 or 18:O-18:2 phosphatidylcholines. Also produced in the brain by primary astrocytes, and esterifies free cholesterol on nascent APOE-containing lipoproteins secreted from glia and influences cerebral spinal fluid (CSF) APOE- and APOA1 levels. Together with APOE and the cholesterol transporter ABCA1, plays a key role in the maturation of glial-derived, nascent lipoproteins. Required for remodeling high-density lipoprotein particles into their spherical forms. The protein is Phosphatidylcholine-sterol acyltransferase (LCAT) of Gerbilliscus gambianus (Gambian gerbil).